The chain runs to 142 residues: Hemoglobin subunit alpha (142 aa).

Residues 2–142 (VLSPADKTNV…VSTVLTSKYR (141 aa)) form the Globin domain. Residue serine 4 is modified to Phosphoserine. Lysine 8 carries the post-translational modification N6-succinyllysine. Threonine 9 bears the Phosphothreonine mark. The residue at position 12 (lysine 12) is an N6-succinyllysine. Lysine 17 bears the N6-acetyllysine; alternate mark. An N6-succinyllysine; alternate modification is found at lysine 17. Tyrosine 25 is modified (phosphotyrosine). Serine 36 is modified (phosphoserine). N6-succinyllysine is present on lysine 41. Residue serine 50 is modified to Phosphoserine. Position 59 (histidine 59) interacts with O2. Histidine 88 serves as a coordination point for heme b. The residue at position 103 (serine 103) is a Phosphoserine. Threonine 109 bears the Phosphothreonine mark. Serine 125 carries the phosphoserine modification. Phosphothreonine occurs at positions 135 and 138. Serine 139 carries the phosphoserine modification.

Belongs to the globin family. In terms of assembly, heterotetramer of two alpha chains and two beta chains. As to expression, red blood cells.

Its function is as follows. Involved in oxygen transport from the lung to the various peripheral tissues. Hemopressin acts as an antagonist peptide of the cannabinoid receptor CNR1. Hemopressin-binding efficiently blocks cannabinoid receptor CNR1 and subsequent signaling. The sequence is that of Hemoglobin subunit alpha (HBA) from Ailuropoda melanoleuca (Giant panda).